Reading from the N-terminus, the 251-residue chain is NAD kinase (251 aa).

Aspartate 51 (proton acceptor) is an active-site residue. Residues 51 to 52, lysine 56, 113 to 114, lysine 124, histidine 140, aspartate 142, 153 to 158, and alanine 177 contribute to the NAD(+) site; these read DG, NE, and TGYSLS.

The protein belongs to the NAD kinase family. Requires a divalent metal cation as cofactor.

It is found in the cytoplasm. It carries out the reaction NAD(+) + ATP = ADP + NADP(+) + H(+). In terms of biological role, involved in the regulation of the intracellular balance of NAD and NADP, and is a key enzyme in the biosynthesis of NADP. Catalyzes specifically the phosphorylation on 2'-hydroxyl of the adenosine moiety of NAD to yield NADP. This Thermosipho melanesiensis (strain DSM 12029 / CIP 104789 / BI429) protein is NAD kinase.